Reading from the N-terminus, the 198-residue chain is Transmembrane protein 9B (198 aa).

Positions 1 to 33 (MATLWGGLLRLGSLLSLSCLALSVLLLAQLSDA) are cleaved as a signal peptide. Residue asparagine 60 is glycosylated (N-linked (GlcNAc...) asparagine). Residues 105-125 (IIIYLSILGLLLLYMVYLTLV) form a helical membrane-spanning segment. Phosphoserine is present on residues serine 142 and serine 189.

Belongs to the TMEM9 family. In terms of processing, N-glycosylated.

The protein localises to the lysosome membrane. The protein resides in the early endosome membrane. Enhances production of pro-inflammatory cytokines induced by TNF, IL1B, and TLR ligands. Has a role in TNF activation of both the NF-kappaB and MAPK pathways. The sequence is that of Transmembrane protein 9B (TMEM9B) from Homo sapiens (Human).